We begin with the raw amino-acid sequence, 232 residues long: 7-cyano-7-deazaguanine synthase (232 aa).

11 to 21 (ASGGMDSATAA) is a binding site for ATP. Positions 192, 200, 203, and 206 each coordinate Zn(2+).

The protein belongs to the QueC family. Zn(2+) is required as a cofactor.

It carries out the reaction 7-carboxy-7-deazaguanine + NH4(+) + ATP = 7-cyano-7-deazaguanine + ADP + phosphate + H2O + H(+). It participates in purine metabolism; 7-cyano-7-deazaguanine biosynthesis. Catalyzes the ATP-dependent conversion of 7-carboxy-7-deazaguanine (CDG) to 7-cyano-7-deazaguanine (preQ(0)). This is 7-cyano-7-deazaguanine synthase from Haloarcula marismortui (strain ATCC 43049 / DSM 3752 / JCM 8966 / VKM B-1809) (Halobacterium marismortui).